The sequence spans 611 residues: mRNA export factor GLE1 (611 aa).

Disordered regions lie at residues S69 to C94 and K220 to R243. The span at D71–D89 shows a compositional bias: acidic residues.

It belongs to the GLE1 family. As to quaternary structure, part of the nuclear pore complex (NPC). The NPC has an eight-fold symmetrical structure comprising a central transport channel and two rings, the cytoplasmic and nuclear rings, to which eight filaments are attached. The cytoplasmic filaments have loose ends, while the nuclear filaments are joined in a distal ring, forming a nuclear basket. NPCs are highly dynamic in configuration and composition, and can be devided in 3 subcomplexes, the NUP62 subcomplex, the NUP107-160 subcomplex and the NUP93 subcomplex, containing approximately 30 different nucleoporin proteins.

The protein localises to the nucleus envelope. It is found in the nucleus. The protein resides in the nuclear pore complex. Functionally, required for seed viability. This chain is mRNA export factor GLE1, found in Arabidopsis thaliana (Mouse-ear cress).